Reading from the N-terminus, the 81-residue chain is Sulfur carrier protein TusA (81 aa).

Cys-19 functions as the Cysteine persulfide intermediate in the catalytic mechanism.

The protein belongs to the sulfur carrier protein TusA family. As to quaternary structure, interacts with IscS.

The protein resides in the cytoplasm. It functions in the pathway tRNA modification. Functionally, sulfur carrier protein involved in sulfur trafficking in the cell. Part of a sulfur-relay system required for 2-thiolation during synthesis of 2-thiouridine of the modified wobble base 5-methylaminomethyl-2-thiouridine (mnm(5)s(2)U) in tRNA. Interacts with IscS and stimulates its cysteine desulfurase activity. Accepts an activated sulfur from IscS, which is then transferred to TusD, and thus determines the direction of sulfur flow from IscS to 2-thiouridine formation. Also appears to be involved in sulfur transfer for the biosynthesis of molybdopterin. The polypeptide is Sulfur carrier protein TusA (Enterobacter sp. (strain 638)).